The following is an 89-amino-acid chain: MESIQLINIGFGNIVSANRVIAIVSPESAPIKRIITDARDRGQLVDATYGRRTRAVIITDSSHVVLSAIQPETVAHRFVVSKEAHANSN.

The protein belongs to the RemA family.

This Rippkaea orientalis (strain PCC 8801 / RF-1) (Cyanothece sp. (strain PCC 8801)) protein is Putative regulatory protein PCC8801_0196.